The following is a 407-amino-acid chain: Formate-dependent phosphoribosylglycinamide formyltransferase (407 aa).

N(1)-(5-phospho-beta-D-ribosyl)glycinamide contacts are provided by residues 28–29 (EL) and E88. ATP contacts are provided by residues R121, K162, 167–172 (SSGKGQ), 202–205 (EGFI), and E210. Residues 126–320 (RLAAEELGVA…EFELHAKAIL (195 aa)) enclose the ATP-grasp domain. Mg(2+)-binding residues include E279 and E291. Residues D298, K367, and 374-375 (RR) each bind N(1)-(5-phospho-beta-D-ribosyl)glycinamide.

This sequence belongs to the PurK/PurT family. In terms of assembly, homodimer.

The catalysed reaction is N(1)-(5-phospho-beta-D-ribosyl)glycinamide + formate + ATP = N(2)-formyl-N(1)-(5-phospho-beta-D-ribosyl)glycinamide + ADP + phosphate + H(+). Its pathway is purine metabolism; IMP biosynthesis via de novo pathway; N(2)-formyl-N(1)-(5-phospho-D-ribosyl)glycinamide from N(1)-(5-phospho-D-ribosyl)glycinamide (formate route): step 1/1. Involved in the de novo purine biosynthesis. Catalyzes the transfer of formate to 5-phospho-ribosyl-glycinamide (GAR), producing 5-phospho-ribosyl-N-formylglycinamide (FGAR). Formate is provided by PurU via hydrolysis of 10-formyl-tetrahydrofolate. The chain is Formate-dependent phosphoribosylglycinamide formyltransferase from Herminiimonas arsenicoxydans.